The sequence spans 451 residues: Probable M18 family aminopeptidase 1 (451 aa).

Positions 93, 168, and 426 each coordinate Zn(2+).

Belongs to the peptidase M18 family. Zn(2+) serves as cofactor.

This is Probable M18 family aminopeptidase 1 (apeA) from Thermotoga maritima (strain ATCC 43589 / DSM 3109 / JCM 10099 / NBRC 100826 / MSB8).